A 350-amino-acid chain; its full sequence is Nicotinate-nucleotide--dimethylbenzimidazole phosphoribosyltransferase (350 aa).

Glutamate 317 (proton acceptor) is an active-site residue.

It belongs to the CobT family.

The enzyme catalyses 5,6-dimethylbenzimidazole + nicotinate beta-D-ribonucleotide = alpha-ribazole 5'-phosphate + nicotinate + H(+). Its pathway is nucleoside biosynthesis; alpha-ribazole biosynthesis; alpha-ribazole from 5,6-dimethylbenzimidazole: step 1/2. Its function is as follows. Catalyzes the synthesis of alpha-ribazole-5'-phosphate from nicotinate mononucleotide (NAMN) and 5,6-dimethylbenzimidazole (DMB). The sequence is that of Nicotinate-nucleotide--dimethylbenzimidazole phosphoribosyltransferase from Shewanella putrefaciens (strain CN-32 / ATCC BAA-453).